A 300-amino-acid chain; its full sequence is NADH-cytochrome b5 reductase 2 (300 aa).

A helical membrane pass occupies residues 12 to 29 (FVYPLVGATIGSIGLAYY). One can recognise an FAD-binding FR-type domain in the interval 49 to 153 (DQWIDLKLKK…KGPVVKWKWE (105 aa)). 156–191 (QFKSIALIGGGTGITPLYQLLREITSNPEDKTKVSL) serves as a coordination point for FAD.

It belongs to the flavoprotein pyridine nucleotide cytochrome reductase family. FAD is required as a cofactor.

Its subcellular location is the mitochondrion outer membrane. It catalyses the reaction 2 Fe(III)-[cytochrome b5] + NADH = 2 Fe(II)-[cytochrome b5] + NAD(+) + H(+). May mediate the reduction of outer membrane cytochrome b5. This is NADH-cytochrome b5 reductase 2 (MCR1) from Lodderomyces elongisporus (strain ATCC 11503 / CBS 2605 / JCM 1781 / NBRC 1676 / NRRL YB-4239) (Yeast).